A 262-amino-acid chain; its full sequence is tRNA pseudouridine synthase A (262 aa).

Asp51 (nucleophile) is an active-site residue. Tyr109 lines the substrate pocket.

It belongs to the tRNA pseudouridine synthase TruA family. In terms of assembly, homodimer.

It carries out the reaction uridine(38/39/40) in tRNA = pseudouridine(38/39/40) in tRNA. Its function is as follows. Formation of pseudouridine at positions 38, 39 and 40 in the anticodon stem and loop of transfer RNAs. The chain is tRNA pseudouridine synthase A from Actinobacillus pleuropneumoniae serotype 5b (strain L20).